A 77-amino-acid polypeptide reads, in one-letter code: uncharacterized protein (77 aa).

Disordered regions lie at residues 1-34 (MSRA…TKMN) and 56-77 (LDGD…FSGR). A compositionally biased stretch (basic and acidic residues) spans 8–20 (DNDKGWAKKKGAD). A compositionally biased stretch (basic residues) spans 25–34 (PRPHKQTKMN). Over residues 56–70 (LDGDIRRGGNKKSER) the composition is skewed to basic and acidic residues.

This is an uncharacterized protein from Dictyostelium discoideum (Social amoeba).